The sequence spans 975 residues: Macrophage colony-stimulating factor 1 receptor 1 (975 aa).

An N-terminal signal peptide occupies residues 1–17 (MQSFLPLLMGIMASASS). Residues 18–519 (VEWRHPVIWF…VEVSDKLFTS (502 aa)) are Extracellular-facing. Ig-like C2-type domains follow at residues 34-113 (SSEV…VYVK), 125-208 (SLRV…INVI), 221-310 (MDEY…LLVV), 329-407 (GLSV…FHVK), and 404-513 (FHVK…VEVS). 3 cysteine pairs are disulfide-bonded: Cys49-Cys93, Cys140-Cys189, and Cys236-Cys292. 9 N-linked (GlcNAc...) asparagine glycosylation sites follow: Asn156, Asn165, Asn246, Asn250, Asn289, Asn301, Asn399, Asn420, and Asn451. A disulfide bond links Cys426 and Cys495. Residues 520 to 540 (TLIGAAGVLAIFLLLLVFLLY) traverse the membrane as a helical segment. Residues 541 to 975 (KYKQKPRFEI…LMKTNNYQFC (435 aa)) are Cytoplasmic-facing. The regulatory juxtamembrane domain stretch occupies residues 544–576 (QKPRFEIRWKIIEAREGNNYTFIDPTQLPYNEK). Tyr563 is subject to Phosphotyrosine; by autocatalysis. Positions 584–918 (LKLGKVLGAG…MISQMINRLL (335 aa)) constitute a Protein kinase domain. Residues 590–598 (LGAGAFGKV) and Lys619 each bind ATP. 2 positions are modified to phosphotyrosine; by autocatalysis: Tyr702 and Tyr726. Residue Asp782 is the Proton acceptor of the active site. An activation loop region spans residues 800 to 822 (DFGLARDIMNDSNYVVKGNARLP). Phosphotyrosine; by autocatalysis occurs at positions 813 and 929. The interval 939–963 (EGEACDEPKRYDPPCERSCDHEEEE) is disordered. Residues 944-958 (DEPKRYDPPCERSCD) are compositionally biased toward basic and acidic residues. Tyr972 bears the Phosphotyrosine; by autocatalysis mark.

Belongs to the protein kinase superfamily. Tyr protein kinase family. CSF-1/PDGF receptor subfamily. Monomer. Homodimer. Interacts with CSF1. Autophosphorylated in response to CSF1 binding. autophosphorylation, leading to its degradation. Post-translationally, ubiquitinated. Becomes rapidly polyubiquitinated after autophosphorylation, leading to its degradation.

It is found in the cell membrane. The enzyme catalyses L-tyrosyl-[protein] + ATP = O-phospho-L-tyrosyl-[protein] + ADP + H(+). Present in an inactive conformation in the absence of bound ligand. CSF1 binding leads to dimerization and activation by autophosphorylation on tyrosine residues. In terms of biological role, tyrosine-protein kinase that acts as a cell-surface receptor for CSF1 and plays an essential role in the regulation of survival, proliferation and differentiation of hematopoietic precursor cells, especially mononuclear phagocytes, such as macrophages and monocytes. Plays an important role in innate immunity and in inflammatory processes. Plays an important role in the regulation of osteoclast proliferation and differentiation, the regulation of bone resorption, and is required for normal bone development. Promotes reorganization of the actin cytoskeleton, regulates formation of membrane ruffles, cell adhesion and cell migration. Activates several signaling pathways in response to ligand binding. The polypeptide is Macrophage colony-stimulating factor 1 receptor 1 (csf1r1) (Takifugu rubripes (Japanese pufferfish)).